A 293-amino-acid chain; its full sequence is 4-diphosphocytidyl-2-C-methyl-D-erythritol kinase (293 aa).

K16 is an active-site residue. 99–109 (PMGAGLGGGSS) serves as a coordination point for ATP. Residue D141 is part of the active site.

This sequence belongs to the GHMP kinase family. IspE subfamily.

The catalysed reaction is 4-CDP-2-C-methyl-D-erythritol + ATP = 4-CDP-2-C-methyl-D-erythritol 2-phosphate + ADP + H(+). It functions in the pathway isoprenoid biosynthesis; isopentenyl diphosphate biosynthesis via DXP pathway; isopentenyl diphosphate from 1-deoxy-D-xylulose 5-phosphate: step 3/6. Catalyzes the phosphorylation of the position 2 hydroxy group of 4-diphosphocytidyl-2C-methyl-D-erythritol. This chain is 4-diphosphocytidyl-2-C-methyl-D-erythritol kinase, found in Burkholderia lata (strain ATCC 17760 / DSM 23089 / LMG 22485 / NCIMB 9086 / R18194 / 383).